The chain runs to 225 residues: UPF0758 protein BCB4264_A4572 (225 aa).

Residues 103 to 225 (SIRSPEDCAK…FVSLKEKGHI (123 aa)) form the MPN domain. Zn(2+) is bound by residues His-174, His-176, and Asp-187. Residues 174 to 187 (HNHPSGDPTPSRED) carry the JAMM motif motif.

It belongs to the UPF0758 family.

This chain is UPF0758 protein BCB4264_A4572, found in Bacillus cereus (strain B4264).